The chain runs to 152 residues: UPF0266 membrane protein ESA_01432 (152 aa).

The next 3 membrane-spanning stretches (helical) occupy residues 1 to 21 (MTLT…WAIY), 45 to 65 (ADSL…VASH), and 67 to 87 (ALLT…LFWI).

The protein belongs to the UPF0266 family.

The protein resides in the cell inner membrane. This Cronobacter sakazakii (strain ATCC BAA-894) (Enterobacter sakazakii) protein is UPF0266 membrane protein ESA_01432.